We begin with the raw amino-acid sequence, 431 residues long: Tyrosine--tRNA ligase (431 aa).

L-tyrosine is bound at residue Y34. The 'HIGH' region motif lies at 39–48 (PTADSLHIGH). Positions 171 and 175 each coordinate L-tyrosine. A 'KMSKS' region motif is present at residues 231-235 (KFGKT). K234 contributes to the ATP binding site. The S4 RNA-binding domain occupies 353–422 (INVVEALVKT…GKYTILRRGK (70 aa)).

It belongs to the class-I aminoacyl-tRNA synthetase family. TyrS type 1 subfamily. As to quaternary structure, homodimer.

Its subcellular location is the cytoplasm. It carries out the reaction tRNA(Tyr) + L-tyrosine + ATP = L-tyrosyl-tRNA(Tyr) + AMP + diphosphate + H(+). Functionally, catalyzes the attachment of tyrosine to tRNA(Tyr) in a two-step reaction: tyrosine is first activated by ATP to form Tyr-AMP and then transferred to the acceptor end of tRNA(Tyr). The chain is Tyrosine--tRNA ligase from Neisseria meningitidis serogroup C (strain 053442).